The primary structure comprises 160 residues: MDIDSLMGFDPLLRNLHYILEATDDNTTGNKSNNSGPSRAYVRDARAMAATPADVKECPNSYVFIVDMPGLKSGDIKVQVERDNVLVISGKRNREEEKEGVKYVRMERRMGKFMKKFALPEDANTDKISAICQDGVLTVTVEKLPPPEPKKPKTIQVQVA.

The sHSP domain maps to 44–160 (DARAMAATPA…KPKTIQVQVA (117 aa)).

It belongs to the small heat shock protein (HSP20) family.

The protein localises to the cytoplasm. This chain is 17.9 kDa class II heat shock protein (HSP17.9), found in Helianthus annuus (Common sunflower).